The chain runs to 249 residues: 3-deoxy-manno-octulosonate cytidylyltransferase (249 aa).

The protein belongs to the KdsB family.

Its subcellular location is the cytoplasm. It catalyses the reaction 3-deoxy-alpha-D-manno-oct-2-ulosonate + CTP = CMP-3-deoxy-beta-D-manno-octulosonate + diphosphate. Its pathway is nucleotide-sugar biosynthesis; CMP-3-deoxy-D-manno-octulosonate biosynthesis; CMP-3-deoxy-D-manno-octulosonate from 3-deoxy-D-manno-octulosonate and CTP: step 1/1. It functions in the pathway bacterial outer membrane biogenesis; lipopolysaccharide biosynthesis. Functionally, activates KDO (a required 8-carbon sugar) for incorporation into bacterial lipopolysaccharide in Gram-negative bacteria. The polypeptide is 3-deoxy-manno-octulosonate cytidylyltransferase (Photorhabdus laumondii subsp. laumondii (strain DSM 15139 / CIP 105565 / TT01) (Photorhabdus luminescens subsp. laumondii)).